The sequence spans 124 residues: Apolipoprotein C-IV (124 aa).

Positions 1–27 are cleaved as a signal peptide; that stretch reads MSLLRCRPRDLPSVSLSVLFLVSFVAS. N-linked (GlcNAc...) asparagine glycosylation occurs at N107.

The protein belongs to the apolipoprotein C4 family. Expressed by the liver and secreted in plasma.

Its subcellular location is the secreted. May participate in lipoprotein metabolism. This Mus musculus (Mouse) protein is Apolipoprotein C-IV (Apoc4).